Consider the following 1236-residue polypeptide: ABC transporter B family member 9 (1236 aa).

Residues 33 to 320 (MTVGTIAAAG…TSPSLNAFAA (288 aa)) form the ABC transmembrane type-1 1 domain. Transmembrane regions (helical) follow at residues 38-58 (IAAA…GQLI), 80-100 (FIYL…CWMV), 158-178 (QLLC…PLLA), 179-199 (GVLC…SLIM), 257-277 (ISGF…GLAV), and 288-308 (GYNG…GMSL). In terms of domain architecture, ABC transporter 1 spans 355–591 (IELKDVYFRY…PEGAYSQLVR (237 aa)). 390–397 (GQSGSGKS) contributes to the ATP binding site. N-linked (GlcNAc...) asparagine glycosylation is present at Asn542. The interval 593–616 (QEGSKEEATESERPETSLDVERSG) is disordered. A compositionally biased stretch (basic and acidic residues) spans 594–616 (EGSKEEATESERPETSLDVERSG). Asn631 and Asn653 each carry an N-linked (GlcNAc...) asparagine glycan. A run of 6 helical transmembrane segments spans residues 685 to 705 (VLVL…IFGL), 725 to 745 (SHFW…MIPV), 785 to 805 (SLVG…TTGL), 806 to 826 (IIAF…SPFI), 902 to 922 (FSFF…AGLI), and 927 to 947 (ATFG…IGVS). In terms of domain architecture, ABC transmembrane type-1 2 spans 686–958 (LVLGSIAAMV…TSAMAPDSNK (273 aa)). One can recognise an ABC transporter 2 domain in the interval 993 to 1230 (IEFRHVSFRY…SGGAYASLVT (238 aa)). 1028–1035 (GESGSGKS) serves as a coordination point for ATP. N-linked (GlcNAc...) asparagine glycosylation is found at Asn1082 and Asn1181.

The protein belongs to the ABC transporter superfamily. ABCB family. Multidrug resistance exporter (TC 3.A.1.201) subfamily.

The protein resides in the membrane. The chain is ABC transporter B family member 9 (ABCB9) from Arabidopsis thaliana (Mouse-ear cress).